The chain runs to 263 residues: MSFLHAILLGLLQGLTEFLPVSSSGHLAIAQHFLPGFSQPGVLFDVLLHAGTMAAVLVYFRYDCRHLALAYFRPHEEAHQYRRLLRLLIIATVPTAIIGLSFKDFFVGAFHNLPLISLMLVVTGGLLFFSERLRKNGRSQGHLQHWDALIAGVAQAGAIMPGISRSGSTISVLLFKGVSGETAARFSFLMALPAVFGATLVSLLEWPAGVSAEIPVYAAGAVMAFLSGLASIHLLMGVVRRRRLYAFAVYCWLMGGMFFAISS.

6 helical membrane passes run 40 to 60, 87 to 107, 109 to 129, 186 to 206, 219 to 239, and 243 to 263; these read PGVL…LVYF, LLII…DFFV, AFHN…LLFF, FSFL…LLEW, AGAV…MGVV, and RLYA…AISS.

Belongs to the UppP family.

Its subcellular location is the cell inner membrane. It catalyses the reaction di-trans,octa-cis-undecaprenyl diphosphate + H2O = di-trans,octa-cis-undecaprenyl phosphate + phosphate + H(+). In terms of biological role, catalyzes the dephosphorylation of undecaprenyl diphosphate (UPP). Confers resistance to bacitracin. This chain is Undecaprenyl-diphosphatase, found in Syntrophotalea carbinolica (strain DSM 2380 / NBRC 103641 / GraBd1) (Pelobacter carbinolicus).